A 239-amino-acid chain; its full sequence is Large ribosomal subunit protein uL2 (239 aa).

2 disordered regions span residues 1–20 and 202–239; these read MGHR…YRAP and FGGG…RRKR.

Belongs to the universal ribosomal protein uL2 family. As to quaternary structure, part of the 50S ribosomal subunit. Forms a bridge to the 30S subunit in the 70S ribosome.

One of the primary rRNA binding proteins. Required for association of the 30S and 50S subunits to form the 70S ribosome, for tRNA binding and peptide bond formation. It has been suggested to have peptidyltransferase activity; this is somewhat controversial. Makes several contacts with the 16S rRNA in the 70S ribosome. This Methanosphaerula palustris (strain ATCC BAA-1556 / DSM 19958 / E1-9c) protein is Large ribosomal subunit protein uL2.